Consider the following 201-residue polypeptide: Holliday junction branch migration complex subunit RuvA (201 aa).

The interval 1–63 (MIEFVRGYVD…EDTLALYGFR (63 aa)) is domain I. The segment at 64–142 (TREERTLFAK…AVTAKTFPDL (79 aa)) is domain II. Positions 143 to 153 (FHLQEESARPH) are flexible linker. The tract at residues 153 to 201 (HLSALEEAIEALKALGYAEREIQKVVPSLMKENLSTDQYVKRALQQLLK) is domain III.

It belongs to the RuvA family. Homotetramer. Forms an RuvA(8)-RuvB(12)-Holliday junction (HJ) complex. HJ DNA is sandwiched between 2 RuvA tetramers; dsDNA enters through RuvA and exits via RuvB. An RuvB hexamer assembles on each DNA strand where it exits the tetramer. Each RuvB hexamer is contacted by two RuvA subunits (via domain III) on 2 adjacent RuvB subunits; this complex drives branch migration. In the full resolvosome a probable DNA-RuvA(4)-RuvB(12)-RuvC(2) complex forms which resolves the HJ.

The protein localises to the cytoplasm. In terms of biological role, the RuvA-RuvB-RuvC complex processes Holliday junction (HJ) DNA during genetic recombination and DNA repair, while the RuvA-RuvB complex plays an important role in the rescue of blocked DNA replication forks via replication fork reversal (RFR). RuvA specifically binds to HJ cruciform DNA, conferring on it an open structure. The RuvB hexamer acts as an ATP-dependent pump, pulling dsDNA into and through the RuvAB complex. HJ branch migration allows RuvC to scan DNA until it finds its consensus sequence, where it cleaves and resolves the cruciform DNA. This is Holliday junction branch migration complex subunit RuvA from Geobacillus sp. (strain WCH70).